Consider the following 422-residue polypeptide: Serine hydroxymethyltransferase (422 aa).

Residues Leu-119 and 123-125 (GHL) contribute to the (6S)-5,6,7,8-tetrahydrofolate site. At Lys-228 the chain carries N6-(pyridoxal phosphate)lysine. (6S)-5,6,7,8-tetrahydrofolate-binding positions include Glu-244 and 352 to 354 (SPF).

The protein belongs to the SHMT family. Homodimer. Pyridoxal 5'-phosphate serves as cofactor.

Its subcellular location is the cytoplasm. It carries out the reaction (6R)-5,10-methylene-5,6,7,8-tetrahydrofolate + glycine + H2O = (6S)-5,6,7,8-tetrahydrofolate + L-serine. It participates in one-carbon metabolism; tetrahydrofolate interconversion. Its pathway is amino-acid biosynthesis; glycine biosynthesis; glycine from L-serine: step 1/1. In terms of biological role, catalyzes the reversible interconversion of serine and glycine with tetrahydrofolate (THF) serving as the one-carbon carrier. This reaction serves as the major source of one-carbon groups required for the biosynthesis of purines, thymidylate, methionine, and other important biomolecules. Also exhibits THF-independent aldolase activity toward beta-hydroxyamino acids, producing glycine and aldehydes, via a retro-aldol mechanism. This is Serine hydroxymethyltransferase from Magnetococcus marinus (strain ATCC BAA-1437 / JCM 17883 / MC-1).